The following is a 133-amino-acid chain: MSAEKISISLPKELYRELEDFITRKGIPDRSKIFQIALRNYLDENREGTEIIYGIINLVYDHEEASEALTEIQHEYKDNIISTLHLHVNERLCIEAIAVKGEKSKLVELNNRLGQIRGILKARLLISFPYEKT.

4 residues coordinate Ni(2+): His-74, His-85, His-87, and Cys-93.

The protein belongs to the transcriptional regulatory CopG/NikR family. Requires Ni(2+) as cofactor.

Its function is as follows. Transcriptional regulator. The sequence is that of Putative nickel-responsive regulator from Saccharolobus islandicus (strain Y.N.15.51 / Yellowstone #2) (Sulfolobus islandicus).